An 884-amino-acid chain; its full sequence is Putative GTP diphosphokinase RSH1, chloroplastic (884 aa).

A chloroplast-targeting transit peptide spans 1–55 (MTSASSMSVSVECVNICNLTKGDGNARSDCSALSCAWKAPRALTGFLASTAHPPV). The 108-residue stretch at 172-279 (FIIHPVAVAR…VKLADRLHNM (108 aa)) folds into the HD domain. The region spanning 563-626 (LGSRVFVFTP…ENAEVVEIVT (64 aa)) is the TGS domain. Residues 711–727 (QSQDKSRDTTPAPQNGS) are compositionally biased toward polar residues. The disordered stretch occupies residues 711-747 (QSQDKSRDTTPAPQNGSVWAPKVNGKHNKAIKNSSSD). The region spanning 797–868 (WLCVVSMDRK…LVLGVLGWSS (72 aa)) is the ACT domain.

It belongs to the RelA/SpoT family. In terms of assembly, interacts with RPP4. Interacts with RPP5. Expressed in hypocotyls, shoots, cotyledons, rosette leaves, sepals and pistils.

It localises to the plastid. The protein resides in the chloroplast. It carries out the reaction GTP + ATP = guanosine 3'-diphosphate 5'-triphosphate + AMP. In terms of biological role, may be involved in a rapid plant ppGpp (guanosine 3'-diphosphate 5'-diphosphate)-mediated response to pathogens and other stresses. Unable to functionally complement E.coli relA mutants. The sequence is that of Putative GTP diphosphokinase RSH1, chloroplastic (RSH1) from Arabidopsis thaliana (Mouse-ear cress).